The chain runs to 264 residues: Meiotic recombination protein REC102 (264 aa).

The protein belongs to the TOP6B-like family. As to quaternary structure, interacts with REC104; seems to form a functional unit with REC104. REC102-REC104 interacts with SKI8-SPO11 and this interaction is required for proper subcellular location of the proteins during the initiation of recombination. Interacts with MEI4, REC114 and SPO11.

The protein resides in the nucleus. Required for formation of the SPO11-mediated double-strand breaks (DSBs) that initiate meiotic recombination. May mediate the interaction between SPO11 subunits during meiosis. Also needed for homolog chromosome pairing, synaptonemal complex formation, and for the proper timing of the first meiotic division. Not required for mitosis and mitotic DNA repair mechanisms. The chain is Meiotic recombination protein REC102 from Saccharomyces cerevisiae (strain ATCC 204508 / S288c) (Baker's yeast).